The sequence spans 215 residues: Protein NETWORKED 3B (215 aa).

The region spanning 5–90 (SKWWWIGANH…QKHDLLIKTS (86 aa)) is the NAB domain. A coiled-coil region spans residues 134–165 (DETMKEELEILREENRVYKEKKEVVTRLLANL).

The protein belongs to the NET family. As to quaternary structure, interacts with F-actin.

In terms of biological role, plant-specific actin binding protein. May be part of a membrane-cytoskeletal adapter complex. This chain is Protein NETWORKED 3B, found in Arabidopsis thaliana (Mouse-ear cress).